We begin with the raw amino-acid sequence, 401 residues long: Enoyl-[acyl-carrier-protein] reductase [NADH] 1 (401 aa).

Residues 48–53, 74–75, 111–112, and 139–140 each bind NAD(+); these read GSSSGY, FE, DA, and LA. Y225 lines the substrate pocket. The active-site Proton donor is Y235. NAD(+) contacts are provided by residues K244 and 273 to 275; that span reads VVT.

The protein belongs to the TER reductase family. In terms of assembly, monomer.

It carries out the reaction a 2,3-saturated acyl-[ACP] + NAD(+) = a (2E)-enoyl-[ACP] + NADH + H(+). It catalyses the reaction a 2,3-saturated acyl-CoA + NAD(+) = a (2E)-enoyl-CoA + NADH + H(+). The enzyme catalyses (2E)-butenoyl-[ACP] + NADH + H(+) = butanoyl-[ACP] + NAD(+). The catalysed reaction is butanoyl-CoA + NAD(+) = (2E)-butenoyl-CoA + NADH + H(+). It participates in lipid metabolism; fatty acid biosynthesis. Weakly inhibited by triclosan. Its function is as follows. Involved in the final reduction of the elongation cycle of fatty acid synthesis (FAS II). Catalyzes the NADH-dependent reduction of a carbon-carbon double bond in an enoyl moiety that is covalently linked to an acyl carrier protein (ACP). It can use both crotonyl-CoA and crotonyl-ACP. This chain is Enoyl-[acyl-carrier-protein] reductase [NADH] 1, found in Vibrio cholerae serotype O1 (strain ATCC 39315 / El Tor Inaba N16961).